A 315-amino-acid chain; its full sequence is Ribosomal RNA small subunit methyltransferase H (315 aa).

Residues 35 to 37 (AGH), D55, F84, D105, and Q112 contribute to the S-adenosyl-L-methionine site.

The protein belongs to the methyltransferase superfamily. RsmH family.

The protein resides in the cytoplasm. The catalysed reaction is cytidine(1402) in 16S rRNA + S-adenosyl-L-methionine = N(4)-methylcytidine(1402) in 16S rRNA + S-adenosyl-L-homocysteine + H(+). Specifically methylates the N4 position of cytidine in position 1402 (C1402) of 16S rRNA. The chain is Ribosomal RNA small subunit methyltransferase H from Streptococcus agalactiae serotype Ia (strain ATCC 27591 / A909 / CDC SS700).